Consider the following 425-residue polypeptide: UDP-sugar transporter protein SLC35A5 (425 aa).

Topologically, residues 1 to 7 (MESNCGH) are cytoplasmic. The helical transmembrane segment at 8 to 28 (PMLSVSSAMYTFLLGAIFITL) threads the bilayer. Over 29-52 (SSSRILLVKYSANEENKYDYLPTT) the chain is Lumenal. A helical transmembrane segment spans residues 53 to 73 (VNVCSELVKLVFCALVSFWVL). The Cytoplasmic segment spans residues 74–92 (KKEDHQNRKLRCGSWKEFF). A helical membrane pass occupies residues 93–115 (NFMKWSIPAFLYFLDNLIVFYVL). The Lumenal segment spans residues 116 to 119 (SYLQ). Residues 120–142 (PAMAVIFSNFSIITTALLFRIVL) traverse the membrane as a helical segment. The Cytoplasmic segment spans residues 143-147 (KRHLN). A helical membrane pass occupies residues 148–168 (GIQWASLLILFLSIVALTSGT). Residues 169–228 (ETSQHSLAGHGFHHDALFSPSNSCLLFRSECPRKDNCTAKEWTFSEAQWNTTARVFSHIR) lie on the Lumenal side of the membrane. Asn204 and Asn218 each carry an N-linked (GlcNAc...) asparagine glycan. Residues 229–249 (LGLGHVLIIVQCFISSMANIY) traverse the membrane as a helical segment. The Cytoplasmic segment spans residues 250–263 (NEKILKEGNQLTES). A helical transmembrane segment spans residues 264–284 (IFVQNSKLYFFGVLFNGLTLG). Topologically, residues 285–303 (LQSGNRDQIKNCGIFYGHN) are lumenal. A helical membrane pass occupies residues 304–324 (AFSVALIFVTAFQGLSVAFIL). Residues 325-330 (KFLDNM) lie on the Cytoplasmic side of the membrane. The helical transmembrane segment at 331–351 (FHVLMAQVTTVVITTVSVLVF) threads the bilayer. Residues 352–354 (DFR) lie on the Lumenal side of the membrane. A helical membrane pass occupies residues 355–375 (PSLEFFLEAPSVLLSILIYNA). The Cytoplasmic portion of the chain corresponds to 376–425 (SNPQGVENVPRKERIRDLSGTLWERSSGDGEELERLTKPKSDIESDEDTF). A phosphoserine mark is found at Ser394, Ser416, and Ser420. The tract at residues 398–425 (WERSSGDGEELERLTKPKSDIESDEDTF) is disordered. Positions 408–418 (LERLTKPKSDI) are enriched in basic and acidic residues.

This sequence belongs to the nucleotide-sugar transporter family. SLC35A subfamily. As to quaternary structure, probably forms homooligomers and heterooligomers with SLC35A1, SLC35A2, SLC35A3 and SLC35A4.

The protein resides in the golgi apparatus membrane. It carries out the reaction UMP(out) + UDP-alpha-D-glucuronate(in) = UMP(in) + UDP-alpha-D-glucuronate(out). The catalysed reaction is UMP(out) + UDP-N-acetyl-alpha-D-glucosamine(in) = UMP(in) + UDP-N-acetyl-alpha-D-glucosamine(out). The enzyme catalyses UDP-N-acetyl-alpha-D-galactosamine(in) + UMP(out) = UDP-N-acetyl-alpha-D-galactosamine(out) + UMP(in). Probable UDP-sugar:UMP transmembrane antiporter involved in UDP-alpha-D-glucuronate/UDP-GlcA, UDP-GlcNAc/UDP-N-acetyl-alpha-D-glucosamine and UDP-N-acetyl-alpha-D-galactosamine/UDP-GalNAc transport from the cytosol to the lumen of the Golgi. In Bos taurus (Bovine), this protein is UDP-sugar transporter protein SLC35A5.